A 102-amino-acid chain; its full sequence is Gastrin/cholecystokinin-like peptide (102 aa).

The signal sequence occupies residues 1 to 20 (MDKKVCVSILLAMLAIAALC). The propeptide occupies 21-45 (RPMTELESARHGAQRKNSISDVSRR). Y86 is subject to Sulfotyrosine. At F92 the chain carries Phenylalanine amide. The propeptide occupies 96 to 102 (SSEVTES).

The protein belongs to the gastrin/cholecystokinin family. In terms of tissue distribution, expressed in antrum, duodenum, colon, pancreas, brain and testis. No expression found in kidney, lung, liver, skin or distal two-thirds of small intestine. In the brain, strongly expressed in the pituitary gland with moderate expression in the neural lobe, brain stem and hypothalamus.

The protein localises to the secreted. Functionally, may control digestion processes. The polypeptide is Gastrin/cholecystokinin-like peptide (GAST) (Aquarana catesbeiana (American bullfrog)).